We begin with the raw amino-acid sequence, 295 residues long: Ventral anterior homeobox 1a (295 aa).

Positions 20-33 (ISKPKDNKEIRETQ) are enriched in basic and acidic residues. Residues 20–63 (ISKPKDNKEIRETQAKMPSTYLKEQPGTYPAPGSSELCAKNKSS) form a disordered region. The homeobox DNA-binding region spans 97 to 156 (PKRSRTSFTAEQLYRLEMEFQRCQYVVGRERTDLSRQLNLSETQVKVWFQNRRTKQKKDQ). A disordered region spans residues 203-226 (RAPNSSGPGTRSLATVTSTPPHQP). The segment covering 204–222 (APNSSGPGTRSLATVTSTP) has biased composition (polar residues).

The protein belongs to the EMX homeobox family.

The protein resides in the nucleus. Its function is as follows. May play a role in the specification and maintenance of basal forebrain identity. This is Ventral anterior homeobox 1a (vax1-a) from Xenopus laevis (African clawed frog).